We begin with the raw amino-acid sequence, 351 residues long: Uroporphyrinogen decarboxylase (351 aa).

Substrate contacts are provided by residues 26–30 (RQAGR), Asp-76, Tyr-153, Ser-208, and His-323.

It belongs to the uroporphyrinogen decarboxylase family. As to quaternary structure, homodimer.

It localises to the cytoplasm. It catalyses the reaction uroporphyrinogen III + 4 H(+) = coproporphyrinogen III + 4 CO2. It participates in porphyrin-containing compound metabolism; protoporphyrin-IX biosynthesis; coproporphyrinogen-III from 5-aminolevulinate: step 4/4. Catalyzes the decarboxylation of four acetate groups of uroporphyrinogen-III to yield coproporphyrinogen-III. The polypeptide is Uroporphyrinogen decarboxylase (Prochlorococcus marinus (strain MIT 9211)).